A 255-amino-acid chain; its full sequence is Cytosolic Fe-S cluster assembly factor Nubp2 homolog (255 aa).

ATP is bound at residue 14–21 (GKGGVGKS). The [4Fe-4S] cluster site is built by Cys185 and Cys188.

The protein belongs to the Mrp/NBP35 ATP-binding proteins family. NUBP2/CFD1 subfamily. In terms of assembly, heterotetramer of 2 Nubp1 and 2 Nubp2 chains. Requires [4Fe-4S] cluster as cofactor.

The protein resides in the cytoplasm. Functionally, component of the cytosolic iron-sulfur (Fe/S) protein assembly (CIA) machinery. Required for maturation of extramitochondrial Fe-S proteins. The Nubp1-Nubp2 heterotetramer forms a Fe-S scaffold complex, mediating the de novo assembly of an Fe-S cluster and its transfer to target apoproteins. The sequence is that of Cytosolic Fe-S cluster assembly factor Nubp2 homolog from Drosophila persimilis (Fruit fly).